The primary structure comprises 32 residues: Photosystem II reaction center protein T (32 aa).

Residues alanine 3–phenylalanine 23 form a helical membrane-spanning segment.

This sequence belongs to the PsbT family. In terms of assembly, PSII is composed of 1 copy each of membrane proteins PsbA, PsbB, PsbC, PsbD, PsbE, PsbF, PsbH, PsbI, PsbJ, PsbK, PsbL, PsbM, PsbT, PsbX, PsbY, PsbZ, Psb30/Ycf12, at least 3 peripheral proteins of the oxygen-evolving complex and a large number of cofactors. It forms dimeric complexes.

Its subcellular location is the plastid. The protein resides in the chloroplast thylakoid membrane. Its function is as follows. Found at the monomer-monomer interface of the photosystem II (PS II) dimer, plays a role in assembly and dimerization of PSII. PSII is a light-driven water plastoquinone oxidoreductase, using light energy to abstract electrons from H(2)O, generating a proton gradient subsequently used for ATP formation. The protein is Photosystem II reaction center protein T of Trieres chinensis (Marine centric diatom).